The primary structure comprises 194 residues: dTTP/UTP pyrophosphatase (194 aa).

Aspartate 73 acts as the Proton acceptor in catalysis.

This sequence belongs to the Maf family. YhdE subfamily. Requires a divalent metal cation as cofactor.

Its subcellular location is the cytoplasm. The enzyme catalyses dTTP + H2O = dTMP + diphosphate + H(+). It carries out the reaction UTP + H2O = UMP + diphosphate + H(+). Its function is as follows. Nucleoside triphosphate pyrophosphatase that hydrolyzes dTTP and UTP. May have a dual role in cell division arrest and in preventing the incorporation of modified nucleotides into cellular nucleic acids. The protein is dTTP/UTP pyrophosphatase of Clostridium botulinum (strain Okra / Type B1).